Consider the following 406-residue polypeptide: Cysteine desulfurase (406 aa).

Lysine 226 is modified (N6-(pyridoxal phosphate)lysine). Residue cysteine 364 is the Cysteine persulfide intermediate of the active site.

This sequence belongs to the class-V pyridoxal-phosphate-dependent aminotransferase family. Csd subfamily. In terms of assembly, homodimer. Interacts with SufE and the SufBCD complex composed of SufB, SufC and SufD. The interaction with SufE is required to mediate the direct transfer of the sulfur atom from the S-sulfanylcysteine. Pyridoxal 5'-phosphate is required as a cofactor.

The protein localises to the cytoplasm. It carries out the reaction (sulfur carrier)-H + L-cysteine = (sulfur carrier)-SH + L-alanine. It catalyses the reaction L-selenocysteine + AH2 = hydrogenselenide + L-alanine + A + H(+). It functions in the pathway cofactor biosynthesis; iron-sulfur cluster biosynthesis. Functionally, cysteine desulfurases mobilize the sulfur from L-cysteine to yield L-alanine, an essential step in sulfur metabolism for biosynthesis of a variety of sulfur-containing biomolecules. Component of the suf operon, which is activated and required under specific conditions such as oxidative stress and iron limitation. Acts as a potent selenocysteine lyase in vitro, that mobilizes selenium from L-selenocysteine. Selenocysteine lyase activity is however unsure in vivo. The protein is Cysteine desulfurase of Escherichia coli O7:K1 (strain IAI39 / ExPEC).